We begin with the raw amino-acid sequence, 428 residues long: Enolase (428 aa).

Glutamine 164 contacts (2R)-2-phosphoglycerate. Glutamate 206 functions as the Proton donor in the catalytic mechanism. Positions 243, 286, and 313 each coordinate Mg(2+). Positions 338, 367, 368, and 389 each coordinate (2R)-2-phosphoglycerate. Lysine 338 functions as the Proton acceptor in the catalytic mechanism.

It belongs to the enolase family. Mg(2+) is required as a cofactor.

The protein resides in the cytoplasm. The protein localises to the secreted. Its subcellular location is the cell surface. It carries out the reaction (2R)-2-phosphoglycerate = phosphoenolpyruvate + H2O. Its pathway is carbohydrate degradation; glycolysis; pyruvate from D-glyceraldehyde 3-phosphate: step 4/5. Catalyzes the reversible conversion of 2-phosphoglycerate (2-PG) into phosphoenolpyruvate (PEP). It is essential for the degradation of carbohydrates via glycolysis. This chain is Enolase, found in Dehalococcoides mccartyi (strain ATCC BAA-2266 / KCTC 15142 / 195) (Dehalococcoides ethenogenes (strain 195)).